The sequence spans 274 residues: 4-hydroxy-3-methylbut-2-enyl diphosphate reductase (274 aa).

[4Fe-4S] cluster is bound at residue Cys12. The (2E)-4-hydroxy-3-methylbut-2-enyl diphosphate site is built by His36 and His70. Positions 36 and 70 each coordinate dimethylallyl diphosphate. Isopentenyl diphosphate is bound by residues His36 and His70. Cys92 contributes to the [4Fe-4S] cluster binding site. Residue His120 participates in (2E)-4-hydroxy-3-methylbut-2-enyl diphosphate binding. Dimethylallyl diphosphate is bound at residue His120. Residue His120 coordinates isopentenyl diphosphate. The Proton donor role is filled by Glu122. Residue Thr158 coordinates (2E)-4-hydroxy-3-methylbut-2-enyl diphosphate. Residue Cys186 coordinates [4Fe-4S] cluster. 4 residues coordinate (2E)-4-hydroxy-3-methylbut-2-enyl diphosphate: Ser214, Ser215, Asn216, and Ser258. Dimethylallyl diphosphate contacts are provided by Ser214, Ser215, Asn216, and Ser258. Isopentenyl diphosphate contacts are provided by Ser214, Ser215, Asn216, and Ser258.

The protein belongs to the IspH family. Requires [4Fe-4S] cluster as cofactor.

The catalysed reaction is isopentenyl diphosphate + 2 oxidized [2Fe-2S]-[ferredoxin] + H2O = (2E)-4-hydroxy-3-methylbut-2-enyl diphosphate + 2 reduced [2Fe-2S]-[ferredoxin] + 2 H(+). The enzyme catalyses dimethylallyl diphosphate + 2 oxidized [2Fe-2S]-[ferredoxin] + H2O = (2E)-4-hydroxy-3-methylbut-2-enyl diphosphate + 2 reduced [2Fe-2S]-[ferredoxin] + 2 H(+). It participates in isoprenoid biosynthesis; dimethylallyl diphosphate biosynthesis; dimethylallyl diphosphate from (2E)-4-hydroxy-3-methylbutenyl diphosphate: step 1/1. Its pathway is isoprenoid biosynthesis; isopentenyl diphosphate biosynthesis via DXP pathway; isopentenyl diphosphate from 1-deoxy-D-xylulose 5-phosphate: step 6/6. Functionally, catalyzes the conversion of 1-hydroxy-2-methyl-2-(E)-butenyl 4-diphosphate (HMBPP) into a mixture of isopentenyl diphosphate (IPP) and dimethylallyl diphosphate (DMAPP). Acts in the terminal step of the DOXP/MEP pathway for isoprenoid precursor biosynthesis. This chain is 4-hydroxy-3-methylbut-2-enyl diphosphate reductase, found in Helicobacter pylori (strain P12).